A 66-amino-acid chain; its full sequence is Beta-toxin Cbo3 (66 aa).

Positions 1 to 66 constitute an LCN-type CS-alpha/beta domain; it reads KEGYIVNYHD…VWPLPKKTCN (66 aa). 4 disulfide bridges follow: cysteine 12–cysteine 65, cysteine 16–cysteine 41, cysteine 25–cysteine 46, and cysteine 29–cysteine 48. The residue at position 66 (asparagine 66) is an Asparagine amide.

This sequence belongs to the long (4 C-C) scorpion toxin superfamily. Sodium channel inhibitor family. Beta subfamily. In terms of tissue distribution, expressed by the venom gland.

It localises to the secreted. Beta toxins bind voltage-independently at site-4 of sodium channels and shift the voltage of activation toward more negative potentials thereby affecting sodium channel activation and promoting spontaneous and repetitive firing. A mixture of Cbo2 and Cbo3 is weakly active on the human voltage-gated sodium channels Nav1.4/SCN4A and Nav1.6/SCN8A when tested at 200 nM. In vivo, is toxic to mice when intraperitoneally injected. In Centruroides bonito (Scorpion), this protein is Beta-toxin Cbo3.